A 229-amino-acid polypeptide reads, in one-letter code: Multiple organellar RNA editing factor 5, chloroplastic/mitochondrial (229 aa).

A chloroplast and mitochondrion-targeting transit peptide spans 1-57 (MAKTLARSTASRITKRLISTSGATTPSPSYILSRRSTPVFSHAVGFISSLNRFTTIR).

This sequence belongs to the MORF family. In terms of assembly, homodimer and heterodimers with MORF8/RIP1, MORF3/RIP3, MORF6/RIP6, MORF7/RIP7 and MORF9/RIP9.

The protein resides in the mitochondrion. It localises to the plastid. It is found in the chloroplast. Its function is as follows. Involved in organellar RNA editing. Required for the processing of few RNA editing sites in mitochondria. The protein is Multiple organellar RNA editing factor 5, chloroplastic/mitochondrial of Arabidopsis thaliana (Mouse-ear cress).